The chain runs to 469 residues: Glutamate-1-semialdehyde 2,1-aminomutase, chloroplastic (469 aa).

A chloroplast-targeting transit peptide spans Met1–Ala34. Residue Lys309 is modified to N6-(pyridoxal phosphate)lysine.

The protein belongs to the class-III pyridoxal-phosphate-dependent aminotransferase family. HemL subfamily. As to quaternary structure, homodimer. Pyridoxal 5'-phosphate serves as cofactor.

It localises to the plastid. The protein localises to the chloroplast. The catalysed reaction is (S)-4-amino-5-oxopentanoate = 5-aminolevulinate. It participates in porphyrin-containing compound metabolism; protoporphyrin-IX biosynthesis; 5-aminolevulinate from L-glutamyl-tRNA(Glu): step 2/2. It functions in the pathway porphyrin-containing compound metabolism; chlorophyll biosynthesis. The polypeptide is Glutamate-1-semialdehyde 2,1-aminomutase, chloroplastic (GSA) (Hordeum vulgare (Barley)).